Reading from the N-terminus, the 239-residue chain is 7-cyano-7-deazaguanine synthase (239 aa).

8–18 (FSGGLDSTACL) contributes to the ATP binding site. 4 residues coordinate Zn(2+): C194, C209, C212, and C215.

Belongs to the QueC family. Requires Zn(2+) as cofactor.

It catalyses the reaction 7-carboxy-7-deazaguanine + NH4(+) + ATP = 7-cyano-7-deazaguanine + ADP + phosphate + H2O + H(+). It participates in purine metabolism; 7-cyano-7-deazaguanine biosynthesis. Functionally, catalyzes the ATP-dependent conversion of 7-carboxy-7-deazaguanine (CDG) to 7-cyano-7-deazaguanine (preQ(0)). In Pyrococcus horikoshii (strain ATCC 700860 / DSM 12428 / JCM 9974 / NBRC 100139 / OT-3), this protein is 7-cyano-7-deazaguanine synthase.